The chain runs to 339 residues: Glycerol-3-phosphate dehydrogenase [NAD(P)+] (339 aa).

4 residues coordinate NADPH: Ser15, Tyr16, His36, and Lys110. Residues Lys110, Gly139, and Thr141 each coordinate sn-glycerol 3-phosphate. Residue Ala143 coordinates NADPH. Residues Lys195, Asp248, Ser258, Arg259, and Asn260 each contribute to the sn-glycerol 3-phosphate site. Residue Lys195 is the Proton acceptor of the active site. An NADPH-binding site is contributed by Arg259. NADPH contacts are provided by Val283 and Glu285.

This sequence belongs to the NAD-dependent glycerol-3-phosphate dehydrogenase family.

It is found in the cytoplasm. The catalysed reaction is sn-glycerol 3-phosphate + NAD(+) = dihydroxyacetone phosphate + NADH + H(+). It carries out the reaction sn-glycerol 3-phosphate + NADP(+) = dihydroxyacetone phosphate + NADPH + H(+). It functions in the pathway membrane lipid metabolism; glycerophospholipid metabolism. Functionally, catalyzes the reduction of the glycolytic intermediate dihydroxyacetone phosphate (DHAP) to sn-glycerol 3-phosphate (G3P), the key precursor for phospholipid synthesis. The chain is Glycerol-3-phosphate dehydrogenase [NAD(P)+] from Citrobacter koseri (strain ATCC BAA-895 / CDC 4225-83 / SGSC4696).